Here is a 262-residue protein sequence, read N- to C-terminus: Short-chain Z-isoprenyl diphosphate synthase (262 aa).

Aspartate 40 is a catalytic residue. Aspartate 40 serves as a coordination point for Mg(2+). Residues glycine 41–arginine 44, tryptophan 45, and serine 86–glutamate 88 each bind substrate. Asparagine 89 functions as the Proton acceptor in the catalytic mechanism. Substrate is bound by residues arginine 92, arginine 211, and arginine 217–serine 219. Position 230 (glutamate 230) interacts with Mg(2+).

The protein belongs to the UPP synthase family. Z-FPP synthase subfamily. Mg(2+) serves as cofactor.

It carries out the reaction isopentenyl diphosphate + (2E)-geranyl diphosphate = (2Z,6E)-farnesyl diphosphate + diphosphate. It functions in the pathway phospholipid metabolism; decaprenyl phosphate biosynthesis. Generates Z-farnesyl diphosphate (Z-FPP) from isopentenyl pyrophosphate (IPP). Z-FPP is the precursor of decaprenyl diphosphate, which has a central role in the biosynthesis of the mycobacterial cell wall. This is Short-chain Z-isoprenyl diphosphate synthase from Mycobacterium leprae (strain TN).